The sequence spans 229 residues: ATP-dependent Clp protease proteolytic subunit 1 (229 aa).

The active-site Nucleophile is Ser129. Residue His154 is part of the active site.

This sequence belongs to the peptidase S14 family. In terms of assembly, fourteen ClpP subunits assemble into 2 heptameric rings which stack back to back to give a disk-like structure with a central cavity, resembling the structure of eukaryotic proteasomes.

The protein localises to the cytoplasm. It carries out the reaction Hydrolysis of proteins to small peptides in the presence of ATP and magnesium. alpha-casein is the usual test substrate. In the absence of ATP, only oligopeptides shorter than five residues are hydrolyzed (such as succinyl-Leu-Tyr-|-NHMec, and Leu-Tyr-Leu-|-Tyr-Trp, in which cleavage of the -Tyr-|-Leu- and -Tyr-|-Trp bonds also occurs).. Functionally, cleaves peptides in various proteins in a process that requires ATP hydrolysis. Has a chymotrypsin-like activity. Plays a major role in the degradation of misfolded proteins. The protein is ATP-dependent Clp protease proteolytic subunit 1 of Thermosynechococcus vestitus (strain NIES-2133 / IAM M-273 / BP-1).